We begin with the raw amino-acid sequence, 364 residues long: Geranylgeranyl pyrophosphate synthase janG (364 aa).

K83, R86, and H115 together coordinate isopentenyl diphosphate. Positions 122 and 126 each coordinate Mg(2+). R131 lines the dimethylallyl diphosphate pocket. R132 contacts isopentenyl diphosphate. Residues K209, T210, and Q243 each coordinate dimethylallyl diphosphate. D246 is a Mg(2+) binding site. Positions 250, 260, and 270 each coordinate dimethylallyl diphosphate.

Belongs to the FPP/GGPP synthase family. Mg(2+) serves as cofactor.

It catalyses the reaction isopentenyl diphosphate + dimethylallyl diphosphate = (2E)-geranyl diphosphate + diphosphate. It carries out the reaction isopentenyl diphosphate + (2E)-geranyl diphosphate = (2E,6E)-farnesyl diphosphate + diphosphate. The catalysed reaction is isopentenyl diphosphate + (2E,6E)-farnesyl diphosphate = (2E,6E,10E)-geranylgeranyl diphosphate + diphosphate. Its pathway is secondary metabolite biosynthesis. Its function is as follows. Geranylgeranyl pyrophosphate synthase; part of the gene cluster that mediates the biosynthesis of the indole diterpenes janthitremanes such as shearinine K or shearinine A. The geranylgeranyl diphosphate (GGPP) synthase janG catalyzes the first step in janthitremane biosynthesis via conversion of farnesyl pyrophosphate and isopentyl pyrophosphate into geranylgeranyl pyrophosphate (GGPP). Condensation of indole-3-glycerol phosphate with GGPP by the prenyl transferase janC then forms 3-geranylgeranylindole (3-GGI). Epoxidation by the FAD-dependent monooxygenase janM leads to a epoxidized-GGI that is substrate of the terpene cyclase janB for cyclization to yield paspaline. Paspaline is subsequently converted to 13-desoxypaspaline by the cytochrome P450 monooxygenase janP, via beta-PC-M6 in a series of alpha-face oxidations. The cytochrome P450 monooxygenase janQ is proposed to carry out sequential beta-face oxidation steps at C-7 and C-13 of 13-desoxypaspaline to form paspalicine and paspalinine respectively. The indole diterpene prenyltransferase janD may then convert paspalinine into shearinine K which is substrate of janO and/or additional enzymes for oxidation and cyclization to generate shearinine A. The chain is Geranylgeranyl pyrophosphate synthase janG from Penicillium janthinellum (Penicillium vitale).